Reading from the N-terminus, the 350-residue chain is MSREGRRRTLRVLVVDDSAASRDELVRLLHGGDGLVVAGTAADGEQGLAEALRLEPDVVVLDLQMPRMDGFTFLRLLMARRPTPVVVLSSRSRRADVFKALELGALDFVARPERGGLAPVREELLEKCATVRALRIQNLSAGARALDARELEPARVAVVGASTGGPSALQRLLAALPGELPLAVLVAQHMPERFTGAFAERLARGSHFSVVEAVDGDLVVAGRALVAPGGHHLELARGADGVLRAAVLPPGAPGPGARHCPSIDRLFRSAARMLGRRACAALLTGMGTDGRDGIAAVKAAGGLTLAESEETAVVYGMPQAAAETGAVDALLGLDALTARLVEFARDARAP.

A Response regulatory domain is found at 11 to 126 (RVLVVDDSAA…LAPVREELLE (116 aa)). Aspartate 62 carries the post-translational modification 4-aspartylphosphate. A CheB-type methylesterase domain is found at 150–347 (ELEPARVAVV…ARLVEFARDA (198 aa)). Active-site residues include serine 162, histidine 189, and aspartate 289.

It belongs to the CheB family. In terms of processing, phosphorylated by CheA. Phosphorylation of the N-terminal regulatory domain activates the methylesterase activity.

It is found in the cytoplasm. It carries out the reaction [protein]-L-glutamate 5-O-methyl ester + H2O = L-glutamyl-[protein] + methanol + H(+). The catalysed reaction is L-glutaminyl-[protein] + H2O = L-glutamyl-[protein] + NH4(+). Its function is as follows. Involved in chemotaxis. Part of a chemotaxis signal transduction system that modulates chemotaxis in response to various stimuli. Catalyzes the demethylation of specific methylglutamate residues introduced into the chemoreceptors (methyl-accepting chemotaxis proteins or MCP) by CheR. Also mediates the irreversible deamidation of specific glutamine residues to glutamic acid. This chain is Protein-glutamate methylesterase/protein-glutamine glutaminase 6, found in Anaeromyxobacter dehalogenans (strain 2CP-C).